A 25-amino-acid chain; its full sequence is Zinc metalloproteinase-disintegrin-like daborhagin-M (25 aa).

In terms of domain architecture, Peptidase M12B spans Ser-14 to Ser-25. A Ca(2+)-binding site is contributed by Glu-17.

The protein belongs to the venom metalloproteinase (M12B) family. P-III subfamily. P-IIIa sub-subfamily. Monomer. Zn(2+) is required as a cofactor. N-glycosylated. In terms of processing, contains 16 disulfide bonds. As to expression, expressed by the venom gland.

The protein localises to the secreted. With respect to regulation, inhibited by EDTA, EGTA and 1,10-phenanthroline. Addition of Mg(2+) or Ca(2+) increases the casein hydrolysis rate. Functionally, snake venom zinc metalloprotease that possesses high hemorrhagic activity (minimum hemorrhagic dose, MHD=0.86 ug) when subcutaneously injected into mice. Has potent fibrinogenolytic activity on alpha-chain of fibrinogen (FGA). Hydrolyzes model substrate (beta-chain of insulin) at Ala(14)-Leu(15) and Tyr(16)-Leu(17) followed by His(10)-Leu(11) and Phe(24)-Phe(25). The polypeptide is Zinc metalloproteinase-disintegrin-like daborhagin-M (Daboia siamensis (Eastern Russel's viper)).